We begin with the raw amino-acid sequence, 234 residues long: Protein-toxin resistance protein KTD1 (234 aa).

The Cytoplasmic segment spans residues 1-47 (MQTPSENTDVKMDTLDEPSAHLIEENVALPEDTFSSHLSYVLYEIAH). The chain crosses the membrane as a helical span at residues 48–68 (CKPIMFMIIIIVSLISLIVLF). A required for resistance to killer toxin K28, a protein-toxin encoded by the M28 virus region spans residues 68-75 (FHDNDGCT). At 69 to 76 (HDNDGCTV) the chain is on the extracellular side. The helical transmembrane segment at 77–97 (ILVMSLIVASMALMVVAAFTF) threads the bilayer. The Cytoplasmic segment spans residues 98-234 (GKAITEQEFM…RKQYPDADLP (137 aa)). The tract at residues 147–234 (FYSGKKCHEF…RKQYPDADLP (88 aa)) is required for resistance to killer toxin K28, a protein-toxin encoded by the M28 virus. The segment at 168–187 (SHSDSSSNSAEDTQSPVSAG) is disordered. The segment covering 177–187 (AEDTQSPVSAG) has biased composition (polar residues). Lys-217 participates in a covalent cross-link: Glycyl lysine isopeptide (Lys-Gly) (interchain with G-Cter in ubiquitin).

The protein belongs to the DUP/COS family.

The protein localises to the vacuole membrane. It is found in the golgi apparatus. The protein resides in the trans-Golgi network membrane. Its subcellular location is the endosome membrane. In terms of biological role, confers resistance to killer toxin K28, a protein-toxin encoded by the M28 virus that uses S.cerevisiae as a host. Probably acts against K28 after endocytosis of the protein-toxin. The sequence is that of Protein-toxin resistance protein KTD1 from Saccharomyces cerevisiae (strain ATCC 204508 / S288c) (Baker's yeast).